A 610-amino-acid polypeptide reads, in one-letter code: ATP-dependent zinc metalloprotease FtsH (610 aa).

At 1–5 the chain is on the cytoplasmic side; sequence MNRSN. Residues 6 to 26 form a helical membrane-spanning segment; the sequence is IWNLLFTILIIVTLFWLARFF. Residues 27–107 lie on the Periplasmic side of the membrane; the sequence is YVENSPVSKL…SGERSGSSSF (81 aa). Residues 108–128 traverse the membrane as a helical segment; that stretch reads WINVLGTLIPTILFIVVWLFI. Residues 129-610 are Cytoplasmic-facing; that stretch reads MRSLSGRNNQ…LSEEFEKVVE (482 aa). Residues G164, 204–208, L209, H343, and E371 contribute to the ATP site; that span reads GTGKT. H423 serves as a coordination point for Zn(2+). The active site involves E424. Residues H427 and D500 each contribute to the Zn(2+) site.

This sequence in the central section; belongs to the AAA ATPase family. The protein in the C-terminal section; belongs to the peptidase M41 family. In terms of assembly, the isolated ADP-bound cytosolic domain forms a 6-fold symmetric protease disk and a 2-fold symmetric AAA ATPase ring. In the absence of nucleotide the AAA ATPase ring also forms symmetric hexamers. The cofactor is Zn(2+).

Its subcellular location is the cell inner membrane. In terms of biological role, acts as a processive, ATP-dependent zinc metallopeptidase for both cytoplasmic and membrane proteins. Plays a role in the quality control of integral membrane proteins. In Thermotoga maritima (strain ATCC 43589 / DSM 3109 / JCM 10099 / NBRC 100826 / MSB8), this protein is ATP-dependent zinc metalloprotease FtsH.